A 443-amino-acid chain; its full sequence is UDP-N-acetylmuramate--L-alanine ligase (443 aa).

110 to 116 serves as a coordination point for ATP; sequence GAHGKTS.

Belongs to the MurCDEF family.

It localises to the cytoplasm. It catalyses the reaction UDP-N-acetyl-alpha-D-muramate + L-alanine + ATP = UDP-N-acetyl-alpha-D-muramoyl-L-alanine + ADP + phosphate + H(+). The protein operates within cell wall biogenesis; peptidoglycan biosynthesis. Its function is as follows. Cell wall formation. The chain is UDP-N-acetylmuramate--L-alanine ligase from Streptococcus equi subsp. zooepidemicus (strain MGCS10565).